Reading from the N-terminus, the 194-residue chain is RNA polymerase II subunit A C-terminal domain phosphatase SSU72 like protein 6 (194 aa).

It belongs to the SSU72 phosphatase family.

It is found in the nucleus. The catalysed reaction is O-phospho-L-seryl-[protein] + H2O = L-seryl-[protein] + phosphate. It carries out the reaction O-phospho-L-threonyl-[protein] + H2O = L-threonyl-[protein] + phosphate. In terms of biological role, protein phosphatase that catalyzes the dephosphorylation of the C-terminal domain of RNA polymerase II. Plays a role in RNA processing and termination. The chain is RNA polymerase II subunit A C-terminal domain phosphatase SSU72 like protein 6 from Homo sapiens (Human).